The chain runs to 327 residues: ABC transporter periplasmic-binding protein YphF (327 aa).

The first 26 residues, 1–26, serve as a signal peptide directing secretion; that stretch reads MPTKMRTTRNLLLMATLLGSALFARA.

The protein belongs to the bacterial solute-binding protein 2 family.

It is found in the periplasm. In terms of biological role, probably part of the binding-protein-dependent transport system YphDEF. The sequence is that of ABC transporter periplasmic-binding protein YphF (yphF) from Escherichia coli (strain K12).